Consider the following 286-residue polypeptide: Putative sugar uptake protein lin0215 (286 aa).

Transmembrane regions (helical) follow at residues 4-26 (MIAL…FGGS), 33-55 (GMTL…VYTL), 114-136 (LRII…TSYA), 149-167 (GLIT…VVLI), 177-194 (AILP…IMTH), 207-226 (LLLI…MVHA), 230-252 (VGVA…GGIV), and 264-283 (LYVI…IGVA).

Belongs to the GRP transporter (TC 2.A.7.5) family.

It localises to the cell membrane. The sequence is that of Putative sugar uptake protein lin0215 from Listeria innocua serovar 6a (strain ATCC BAA-680 / CLIP 11262).